Here is a 406-residue protein sequence, read N- to C-terminus: Cysteine desulfurase (406 aa).

Lys226 is subject to N6-(pyridoxal phosphate)lysine. The active-site Cysteine persulfide intermediate is the Cys364.

Belongs to the class-V pyridoxal-phosphate-dependent aminotransferase family. Csd subfamily. In terms of assembly, homodimer. Interacts with SufE and the SufBCD complex composed of SufB, SufC and SufD. The interaction with SufE is required to mediate the direct transfer of the sulfur atom from the S-sulfanylcysteine. Pyridoxal 5'-phosphate serves as cofactor.

The protein localises to the cytoplasm. The enzyme catalyses (sulfur carrier)-H + L-cysteine = (sulfur carrier)-SH + L-alanine. The catalysed reaction is L-selenocysteine + AH2 = hydrogenselenide + L-alanine + A + H(+). It participates in cofactor biosynthesis; iron-sulfur cluster biosynthesis. Functionally, cysteine desulfurases mobilize the sulfur from L-cysteine to yield L-alanine, an essential step in sulfur metabolism for biosynthesis of a variety of sulfur-containing biomolecules. Component of the suf operon, which is activated and required under specific conditions such as oxidative stress and iron limitation. Acts as a potent selenocysteine lyase in vitro, that mobilizes selenium from L-selenocysteine. Selenocysteine lyase activity is however unsure in vivo. The sequence is that of Cysteine desulfurase from Escherichia coli O8 (strain IAI1).